We begin with the raw amino-acid sequence, 256 residues long: Phosphonates import ATP-binding protein PhnC (256 aa).

The 245-residue stretch at 2–246 folds into the ABC transporter domain; sequence LKVIQLDKTY…VLQHIYRQPD (245 aa). Position 35–42 (35–42) interacts with ATP; that stretch reads GPSGAGKT.

This sequence belongs to the ABC transporter superfamily. Phosphonates importer (TC 3.A.1.9.1) family. In terms of assembly, the complex is composed of two ATP-binding proteins (PhnC), two transmembrane proteins (PhnE) and a solute-binding protein (PhnD).

The protein resides in the cell membrane. It carries out the reaction phosphonate(out) + ATP + H2O = phosphonate(in) + ADP + phosphate + H(+). Functionally, part of the ABC transporter complex PhnCDE involved in phosphonates import. Responsible for energy coupling to the transport system. This is Phosphonates import ATP-binding protein PhnC from Lactiplantibacillus plantarum (strain ATCC BAA-793 / NCIMB 8826 / WCFS1) (Lactobacillus plantarum).